A 365-amino-acid chain; its full sequence is Peptide chain release factor 2 (365 aa).

N5-methylglutamine is present on Gln251.

The protein belongs to the prokaryotic/mitochondrial release factor family. Methylated by PrmC. Methylation increases the termination efficiency of RF2.

The protein resides in the cytoplasm. In terms of biological role, peptide chain release factor 2 directs the termination of translation in response to the peptide chain termination codons UGA and UAA. The polypeptide is Peptide chain release factor 2 (Campylobacter jejuni subsp. jejuni serotype O:6 (strain 81116 / NCTC 11828)).